Consider the following 317-residue polypeptide: MNFSLSKQSSEKQSSYTDKSRSPNIGMCTVNYKSNLPLQVSAVDQLSTGKGTQFYGHNSYKNERECYNSTKINLPPISSLLPNFENNTPPNVDSRVQFPPQQVYQSMNVVPIVNEIYTPISMNATSDQYPIYYTESQQPIPHSQSPHLTSSAPLMMPVMVPTVYKPLTPYDKEPITIASEPNFTAISMASHPNAALELCHDRPKSVPPGYGVLPTMQEASNGRTKSEPGAVLNGSATFSDWKTDTRISSTKLRKQCPVCGKICSRPSTLKTHYLIHTGDTPFKCTWEGCTKSFNVKSNMLRHLKSHERKRNKVLNTT.

Residues 1–15 show a composition bias toward low complexity; that stretch reads MNFSLSKQSSEKQSS. Positions 1–22 are disordered; it reads MNFSLSKQSSEKQSSYTDKSRS. 2 C2H2-type zinc fingers span residues 254 to 276 and 282 to 306; these read KQCPVCGKICSRPSTLKTHYLIH and FKCTWEGCTKSFNVKSNMLRHLKSH.

The protein resides in the nucleus. Its function is as follows. Probable transcription factor involved in the regulation of the transcription of genes involved in cell rescue and defense, as well as cell cycle and DNA processing. In Saccharomyces cerevisiae (strain ATCC 204508 / S288c) (Baker's yeast), this protein is Zinc finger protein CRM3.